The sequence spans 210 residues: UPF0502 protein Sama_1967 (210 aa).

This sequence belongs to the UPF0502 family.

The protein is UPF0502 protein Sama_1967 of Shewanella amazonensis (strain ATCC BAA-1098 / SB2B).